We begin with the raw amino-acid sequence, 205 residues long: High frequency lysogenization protein HflD homolog (205 aa).

Belongs to the HflD family.

The protein localises to the cytoplasm. The protein resides in the cell inner membrane. The sequence is that of High frequency lysogenization protein HflD homolog from Aliivibrio fischeri (strain MJ11) (Vibrio fischeri).